A 1390-amino-acid chain; its full sequence is DNA-directed RNA polymerase subunit beta'' (1390 aa).

Residues C220, C291, C298, and C301 each coordinate Zn(2+).

The protein belongs to the RNA polymerase beta' chain family. RpoC2 subfamily. In plastids the minimal PEP RNA polymerase catalytic core is composed of four subunits: alpha, beta, beta', and beta''. When a (nuclear-encoded) sigma factor is associated with the core the holoenzyme is formed, which can initiate transcription. The cofactor is Zn(2+).

It is found in the plastid. Its subcellular location is the chloroplast. The enzyme catalyses RNA(n) + a ribonucleoside 5'-triphosphate = RNA(n+1) + diphosphate. Its function is as follows. DNA-dependent RNA polymerase catalyzes the transcription of DNA into RNA using the four ribonucleoside triphosphates as substrates. The chain is DNA-directed RNA polymerase subunit beta'' from Populus alba (White poplar).